An 824-amino-acid polypeptide reads, in one-letter code: Disintegrin and metalloproteinase domain-containing protein 17 (824 aa).

The first 17 residues, 1-17, serve as a signal peptide directing secretion; the sequence is MRQSLLFLTSVVPFVLA. Residues 18–214 constitute a propeptide that is removed on maturation; that stretch reads PRPPDDPGFG…PEELVHRVKR (197 aa). N-linked (GlcNAc...) asparagine glycans are attached at residues N103, N157, and N174. The short motif at 182 to 189 is the Cysteine switch element; sequence KVCGYLKV. C184 serves as a coordination point for Zn(2+). The Extracellular segment spans residues 215 to 671; the sequence is RADPDPMKNT…NTFGKFLADN (457 aa). A Peptidase M12B domain is found at 223 to 474; that stretch reads NTCKLLVVAD…KAQECFQERS (252 aa). 3 disulfides stabilise this stretch: C225/C333, C365/C469, and C423/C453. N264 is a glycosylation site (N-linked (GlcNAc...) asparagine). H405 serves as a coordination point for Zn(2+). Residue E406 is part of the active site. Zn(2+) is bound by residues H409 and H415. N-linked (GlcNAc...) asparagine glycosylation is found at N452, N498, N539, and N551. Positions 475–563 constitute a Disintegrin domain; the sequence is NKVCGNSRVD…ECPPPGNAED (89 aa). Cystine bridges form between C534-C555, C573-C582, C578-C591, and C593-C600. N594 carries an N-linked (GlcNAc...) asparagine glycan. Residues 603 to 671 form a crambin-like region; that stretch reads CCRDLSGRCV…NTFGKFLADN (69 aa). A helical membrane pass occupies residues 672–692; the sequence is IVGSVLVFSLIFWIPFSILVH. Residues 693 to 824 lie on the Cytoplasmic side of the membrane; it reads CVDKKLDKQY…NRVDSKETEC (132 aa). 2 consecutive short sequence motifs (SH3-binding) follow at residues 731-738 and 741-748; these read PAPQTPGR and PAPVIPSA. The disordered stretch occupies residues 732-824; it reads APQTPGRLQP…NRVDSKETEC (93 aa). T735 is modified (phosphothreonine; by MAPK14). Positions 741–752 are enriched in low complexity; that stretch reads PAPVIPSAPAAP. A Phosphothreonine modification is found at T761. S767 is modified (phosphoserine). Basic and acidic residues-rich tracts occupy residues 768–781, 791–807, and 815–824; these read TDSH…EKDP, SFED…EKAA, and NRVDSKETEC. S791 and S819 each carry phosphoserine.

As to quaternary structure, interacts with MAD2L1, MAPK14 and MUC1. Interacts with iRhom1/RHBDF1 and iRhom2/RHBDF2. Interacts with FRMD8 via its interaction with iRhom1/RHBDF1 and iRhom2/RHBDF2. Interacts with TSPAN8. Zn(2+) is required as a cofactor. The precursor is cleaved by a furin endopeptidase. In terms of processing, phosphorylated. Stimulation by growth factor or phorbol 12-myristate 13-acetate induces phosphorylation of Ser-819 but decreases phosphorylation of Ser-791. Phosphorylation at Thr-735 by MAPK14 is required for ADAM17-mediated ectodomain shedding. In terms of tissue distribution, ubiquitously expressed. Expressed at highest levels in adult heart, placenta, skeletal muscle, pancreas, spleen, thymus, prostate, testes, ovary and small intestine, and in fetal brain, lung, liver and kidney. Expressed in natural killer cells (at protein level).

It is found in the cell membrane. It carries out the reaction Narrow endopeptidase specificity. Cleaves Pro-Leu-Ala-Gln-Ala-|-Val-Arg-Ser-Ser-Ser in the membrane-bound, 26-kDa form of tumor necrosis factor alpha (TNFalpha). Similarly cleaves other membrane-anchored, cell-surface proteins to 'shed' the extracellular domains.. Functionally, transmembrane metalloprotease which mediates the ectodomain shedding of a myriad of transmembrane proteins including adhesion proteins, growth factor precursors and cytokines important for inflammation and immunity. Cleaves the membrane-bound precursor of TNF-alpha to its mature soluble form. Responsible for the proteolytical release of soluble JAM3 from endothelial cells surface. Responsible for the proteolytic release of several other cell-surface proteins, including p75 TNF-receptor, interleukin 1 receptor type II, p55 TNF-receptor, transforming growth factor-alpha, L-selectin, growth hormone receptor, MUC1 and the amyloid precursor protein. Acts as an activator of Notch pathway by mediating cleavage of Notch, generating the membrane-associated intermediate fragment called Notch extracellular truncation (NEXT). Plays a role in the proteolytic processing of ACE2. Plays a role in hemostasis through shedding of GP1BA, the platelet glycoprotein Ib alpha chain. Mediates the proteolytic cleavage of LAG3, leading to release the secreted form of LAG3. Mediates the proteolytic cleavage of IL6R, leading to the release of secreted form of IL6R. Mediates the proteolytic cleavage and shedding of FCGR3A upon NK cell stimulation, a mechanism that allows for increased NK cell motility and detachment from opsonized target cells. Cleaves TREM2, resulting in shedding of the TREM2 ectodomain. The sequence is that of Disintegrin and metalloproteinase domain-containing protein 17 from Homo sapiens (Human).